The primary structure comprises 704 residues: CSIAVGMIIEIIVMYPIQHRKYRPGIDNLLVLLIGGIPIAMPTVLSVTMAIGSHRLAQQGAITKRMTAIEEMAGMDVLCSDKTGTLTLNKLTVDKNLVEVFAKGVDADTVVLMAARASRTENQDAIDTAIVGMLADPKEARAGIREIHFLPFNPTDKRTALTYLDGEGKMHRVSKGAPEQILNLAHNKSDIERRVHTVIDKFAERGLRSLGVAYQEVPEGRKESSGGPWQFIGLLPLFDPPRHDSAETIRRALNLGVNVKMITGDQLAIGKETGRRLGMGTNMYPSSALLGQTKDESIASLPIDELIEKADGFAGVFPEHKYEIVKRLQARKHICGMTGDGVNDAPALKKADIGIAVDDATDAARSASDIVLTEPGLSVIISAVLTSRAIFQRMKNYTIYAVSITIRIVLGFMLLALIWKFDFPPFMVLIIAILNDGTIMTISKDRVKPSPLPDSWKLAEIFTTGVVLGGYLAMMTVIFFWAAYETQFFPRVFGVSTLQRTATDDFRKLASAIYLQVSTISQALIFVTRSRSWSFVERPGLLLVVALIVAQLVATLIAVYASWSFAAIEGIGWGWAGVIWLYNLVFYFPLDIIKFLIRYALSGRAWDLVLEQRIAFTRKKDFGKEQRELQWAHAQRTLHGLQVPDIKLFSEATNFNELNQLAEEAKRRAEIARQRELHTLKGHVESVVKLKGLDIETIQQSYTV.

A helical membrane pass occupies residues 1 to 16 (CSIAVGMIIEIIVMYP). The Extracellular segment spans residues 17–26 (IQHRKYRPGI). A helical transmembrane segment spans residues 27–48 (DNLLVLLIGGIPIAMPTVLSVT). At 49-395 (MAIGSHRLAQ…TSRAIFQRMK (347 aa)) the chain is on the cytoplasmic side. Residue Asp81 is the 4-aspartylphosphate intermediate of the active site. Residues Asp340 and Asp344 each contribute to the Mg(2+) site. A helical transmembrane segment spans residues 396–417 (NYTIYAVSITIRIVLGFMLLAL). Over 418-422 (IWKFD) the chain is Extracellular. The chain crosses the membrane as a helical span at residues 423–445 (FPPFMVLIIAILNDGTIMTISKD). Residues 446-461 (RVKPSPLPDSWKLAEI) lie on the Cytoplasmic side of the membrane. Residues 462–482 (FTTGVVLGGYLAMMTVIFFWA) form a helical membrane-spanning segment. The Extracellular segment spans residues 483–507 (AYETQFFPRVFGVSTLQRTATDDFR). The helical transmembrane segment at 508–528 (KLASAIYLQVSTISQALIFVT) threads the bilayer. Residues 529 to 540 (RSRSWSFVERPG) lie on the Cytoplasmic side of the membrane. The chain crosses the membrane as a helical span at residues 541 to 561 (LLLVVALIVAQLVATLIAVYA). Over 562–570 (SWSFAAIEG) the chain is Extracellular. The helical transmembrane segment at 571-591 (IGWGWAGVIWLYNLVFYFPLD) threads the bilayer. Topologically, residues 592–704 (IIKFLIRYAL…IETIQQSYTV (113 aa)) are cytoplasmic.

This sequence belongs to the cation transport ATPase (P-type) (TC 3.A.3) family. Type IIIA subfamily. As to quaternary structure, possibly exists as a homodimer or a homotrimer.

The protein resides in the cell membrane. The catalysed reaction is ATP + H2O + H(+)(in) = ADP + phosphate + 2 H(+)(out). Its function is as follows. The plasma membrane ATPase of plants and fungi is a hydrogen ion pump. The proton gradient it generates drives the active transport of nutrients by H(+)-symport. The resulting external acidification and/or internal alkinization may mediate growth responses. The sequence is that of Plasma membrane ATPase 2 (LHA2) from Solanum lycopersicum (Tomato).